The following is a 43-amino-acid chain: Thymosin beta-12 (43 aa).

Composition is skewed to basic and acidic residues over residues 1–25 (MSDK…ETQE) and 33–43 (ETIEQEKQATA). Positions 1–43 (MSDKPDLAEVSNFDKTKLKKTETQEKNPLPTKETIEQEKQATA) are disordered. Serine 2 carries the N-acetylserine modification.

Belongs to the thymosin beta family.

Its subcellular location is the cytoplasm. The protein resides in the cytoskeleton. Plays an important role in the organization of the cytoskeleton. Binds to and sequesters actin monomers (G actin) and therefore inhibits actin polymerization. This chain is Thymosin beta-12, found in Oncorhynchus mykiss (Rainbow trout).